A 324-amino-acid chain; its full sequence is Polyketide biosynthesis acyltransferase homolog BaeD (324 aa).

The active site involves serine 99.

The protein resides in the cytoplasm. The protein operates within antibiotic biosynthesis; bacillaene biosynthesis. Functionally, probably involved in some intermediate steps for the synthesis of the antibiotic polyketide bacillaene which is involved in secondary metabolism. This Bacillus velezensis (strain DSM 23117 / BGSC 10A6 / LMG 26770 / FZB42) (Bacillus amyloliquefaciens subsp. plantarum) protein is Polyketide biosynthesis acyltransferase homolog BaeD (baeD).